We begin with the raw amino-acid sequence, 602 residues long: Elongation factor 4 (602 aa).

The 183-residue stretch at 7-189 folds into the tr-type G domain; that stretch reads KYIRNFSIVA…AIVNKVPAPD (183 aa). Residues 19–24 and 136–139 contribute to the GTP site; these read DHGKST and NKID.

This sequence belongs to the TRAFAC class translation factor GTPase superfamily. Classic translation factor GTPase family. LepA subfamily.

The protein resides in the cell membrane. The enzyme catalyses GTP + H2O = GDP + phosphate + H(+). Functionally, required for accurate and efficient protein synthesis under certain stress conditions. May act as a fidelity factor of the translation reaction, by catalyzing a one-codon backward translocation of tRNAs on improperly translocated ribosomes. Back-translocation proceeds from a post-translocation (POST) complex to a pre-translocation (PRE) complex, thus giving elongation factor G a second chance to translocate the tRNAs correctly. Binds to ribosomes in a GTP-dependent manner. The polypeptide is Elongation factor 4 (Clostridium botulinum (strain 657 / Type Ba4)).